A 243-amino-acid polypeptide reads, in one-letter code: Adenosylcobinamide-GDP ribazoletransferase (243 aa).

Helical transmembrane passes span 31–51 (LLFY…FNAL), 55–75 (APLL…SGGL), 109–129 (IAVV…VALI), 135–155 (IGLL…FLGT), and 188–208 (VVLA…CFYW).

The protein belongs to the CobS family. Requires Mg(2+) as cofactor.

The protein localises to the cell inner membrane. The enzyme catalyses alpha-ribazole + adenosylcob(III)inamide-GDP = adenosylcob(III)alamin + GMP + H(+). It catalyses the reaction alpha-ribazole 5'-phosphate + adenosylcob(III)inamide-GDP = adenosylcob(III)alamin 5'-phosphate + GMP + H(+). The protein operates within cofactor biosynthesis; adenosylcobalamin biosynthesis; adenosylcobalamin from cob(II)yrinate a,c-diamide: step 7/7. In terms of biological role, joins adenosylcobinamide-GDP and alpha-ribazole to generate adenosylcobalamin (Ado-cobalamin). Also synthesizes adenosylcobalamin 5'-phosphate from adenosylcobinamide-GDP and alpha-ribazole 5'-phosphate. The sequence is that of Adenosylcobinamide-GDP ribazoletransferase from Pseudomonas syringae pv. tomato (strain ATCC BAA-871 / DC3000).